A 327-amino-acid polypeptide reads, in one-letter code: uncharacterized protein (327 aa).

Positions 1-17 (MASMAAAIAASRSAVMS) are enriched in low complexity. Positions 1-22 (MASMAAAIAASRSAVMSGNRPL) are disordered. An N-acetylalanine modification is found at Ala2. Phosphoserine is present on Ser37. A disordered region spans residues 76–113 (GPRAPAPRDPGDSEELTRFPGLRGPTGQKVVRFGDEDL). Ser129 is modified (phosphoserine). Residues 134–148 (SISALSIQEPSNGTA) show a composition bias toward polar residues. The segment at 134–299 (SISALSIQEP…PDVRQDDGED (166 aa)) is disordered. The span at 162–176 (SQALKSSQGSRSSSL) shows a compositional bias: low complexity. Ser175 is subject to Phosphoserine. Basic and acidic residues-rich tracts occupy residues 182–202 (TRKE…RGEG) and 233–252 (PAPK…RQEQ). At Ser289 the chain carries Phosphoserine.

Its subcellular location is the cytoplasm. This is an uncharacterized protein from Homo sapiens (Human).